Consider the following 530-residue polypeptide: Tyrosinase (530 aa).

Positions 1–18 (MLLAALCCLLWSFRTSTG) are cleaved as a signal peptide. Topologically, residues 19-473 (HFPRACASSK…IKPYLEQASR (455 aa)) are lumenal, melanosome. N-linked (GlcNAc...) asparagine glycosylation is found at asparagine 86, asparagine 111, and asparagine 161. Histidine 180, histidine 202, and histidine 211 together coordinate Cu cation. N-linked (GlcNAc...) asparagine glycans are attached at residues asparagine 230 and asparagine 337. 2 residues coordinate Cu cation: histidine 363 and histidine 367. Asparagine 371 carries an N-linked (GlcNAc...) asparagine glycan. Histidine 390 lines the Cu cation pocket. Residues 474–494 (IWPWLIGAAVVGCVVTAVLGG) traverse the membrane as a helical segment. Residues 495–530 (LTSLLCRRNRKQLHEEKQPLLMEKEDYHSLLYQTHL) lie on the Cytoplasmic side of the membrane.

This sequence belongs to the tyrosinase family. Forms an OPN3-dependent complex with DCT in response to blue light in melanocytes. Cu(2+) serves as cofactor. Post-translationally, glycosylated.

The protein localises to the melanosome membrane. Its subcellular location is the melanosome. It carries out the reaction 2 L-dopa + O2 = 2 L-dopaquinone + 2 H2O. The enzyme catalyses L-tyrosine + O2 = L-dopaquinone + H2O. The catalysed reaction is 2 5,6-dihydroxyindole-2-carboxylate + O2 = 2 indole-5,6-quinone-2-carboxylate + 2 H2O. Its function is as follows. This is a copper-containing oxidase that functions in the formation of pigments such as melanins and other polyphenolic compounds. Catalyzes the initial and rate limiting step in the cascade of reactions leading to melanin production from tyrosine. In addition to hydroxylating tyrosine to DOPA (3,4-dihydroxyphenylalanine), also catalyzes the oxidation of DOPA to DOPA-quinone, and possibly the oxidation of DHI (5,6-dihydroxyindole) to indole-5,6 quinone. The protein is Tyrosinase (TYR) of Canis lupus familiaris (Dog).